The following is a 345-amino-acid chain: S-adenosylmethionine:tRNA ribosyltransferase-isomerase (345 aa).

Belongs to the QueA family. As to quaternary structure, monomer.

It is found in the cytoplasm. The catalysed reaction is 7-aminomethyl-7-carbaguanosine(34) in tRNA + S-adenosyl-L-methionine = epoxyqueuosine(34) in tRNA + adenine + L-methionine + 2 H(+). It participates in tRNA modification; tRNA-queuosine biosynthesis. Transfers and isomerizes the ribose moiety from AdoMet to the 7-aminomethyl group of 7-deazaguanine (preQ1-tRNA) to give epoxyqueuosine (oQ-tRNA). The polypeptide is S-adenosylmethionine:tRNA ribosyltransferase-isomerase (Shewanella halifaxensis (strain HAW-EB4)).